A 337-amino-acid polypeptide reads, in one-letter code: Pentalenene synthase (337 aa).

Mg(2+)-binding residues include Asp80, Asp84, Asn219, Ser223, and Glu227. Positions Asp80–Asp84 match the DDXXD motif motif.

Belongs to the terpene synthase family. In terms of assembly, monomer. It depends on Mg(2+) as a cofactor.

It catalyses the reaction (2E,6E)-farnesyl diphosphate = pentalenene + diphosphate. It functions in the pathway sesquiterpene biosynthesis; pentalenene biosynthesis; pentalenene from farnesyl diphosphate: step 1/1. The protein operates within antibiotic biosynthesis; pentalenolactone biosynthesis. Its function is as follows. Catalyzes the cyclization of farnesyl diphosphate (FPP) to the tricyclic sesquiterpene pentalenene, which is the hydrocarbon precursor of the pentalenolactone family of antibiotics produced by a variety of Streptomyces species. The sequence is that of Pentalenene synthase (pntA) from Streptomyces arenae.